The sequence spans 229 residues: Large ribosomal subunit protein bL19cy (229 aa).

A chloroplast-targeting transit peptide spans 1–70 (MATSSHLLPQ…DSKKRKEFIA (70 aa)).

Belongs to the bacterial ribosomal protein bL19 family. In terms of assembly, part of the 50S ribosomal subunit.

The protein resides in the plastid. It is found in the chloroplast. Its function is as follows. Located at the 30S-50S ribosomal subunit interface and binds directly to 23S ribosomal RNA. The protein is Large ribosomal subunit protein bL19cy of Arabidopsis thaliana (Mouse-ear cress).